A 355-amino-acid chain; its full sequence is CX3C chemokine receptor 1 (355 aa).

At 1-31 (MDQFPESVTENFEYDDLAEACYIGDIVVFGT) the chain is on the extracellular side. A helical membrane pass occupies residues 32–59 (VFLSIFYSVIFAIGLVGNLLVVFALTNS). At 60 to 69 (KKPKSVTDIY) the chain is on the cytoplasmic side. The helical transmembrane segment at 70–90 (LLNLALSDLLFVATLPFWTHY) threads the bilayer. The Extracellular segment spans residues 91–103 (LINEKGLHNAMCK). Cys102 and Cys175 are disulfide-bonded. Residues 104-125 (FTTAFFFIGFFGSIFFITVISI) form a helical membrane-spanning segment. The Cytoplasmic segment spans residues 126–142 (DRYLAIVLAANSMNNRT). A helical membrane pass occupies residues 143-167 (VQHGVTISLGVWAAAILVAAPQFMF). The Extracellular segment spans residues 168-195 (TKQKENECLGDYPEVLQEIWPVLRNVET). Residues 196-215 (NFLGFLLPLLIMSYCYFRII) traverse the membrane as a helical segment. At 216–231 (QTLFSCKNHKKAKAIK) the chain is on the cytoplasmic side. Residues 232–256 (LILLVVIVFFLFWTPYNVMIFLETL) traverse the membrane as a helical segment. Residues 257–273 (KLYDFFPSCDMRKDLRL) lie on the Extracellular side of the membrane. A helical transmembrane segment spans residues 274–297 (ALSVTETVAFSHCCLNPLIYAFAG). At 298-355 (EKFRRYLYHLYGKCLAVLCGRSVHVDFSSSESQRSRHGSVLSSNFTYHTSDGDALLLL) the chain is on the cytoplasmic side. Thr346 is subject to Phosphothreonine.

Belongs to the G-protein coupled receptor 1 family. Found in a ternary complex with CX3CL1 and ITGAV:ITGB3 or ITGA4:ITGB1. In terms of assembly, (Microbial infection) Interacts with human respiratory syncytial virus (HRSV) protein G; this interaction modulates host immune response. As to quaternary structure, (Microbial infection) Interacts with HIV-1 envelope polyprotein gp160. In terms of processing, this protein is not N-glycosylated which is unusual for G-protein-coupled receptors. Expressed in lymphoid and neural tissues. Expressed in lymphocyte subsets, such as natural killer (NK) cells, gamma-delta T-cells and terminally differentiated CD8(+) T-cells. Expressed in smooth muscle cells in atherosclerotic plaques.

It localises to the cell membrane. Functionally, receptor for the C-X3-C chemokine fractalkine (CX3CL1) present on many early leukocyte cells; CX3CR1-CX3CL1 signaling exerts distinct functions in different tissue compartments, such as immune response, inflammation, cell adhesion and chemotaxis. CX3CR1-CX3CL1 signaling mediates cell migratory functions. Responsible for the recruitment of natural killer (NK) cells to inflamed tissues. Acts as a regulator of inflammation process leading to atherogenesis by mediating macrophage and monocyte recruitment to inflamed atherosclerotic plaques, promoting cell survival. Involved in airway inflammation by promoting interleukin 2-producing T helper (Th2) cell survival in inflamed lung. Involved in the migration of circulating monocytes to non-inflamed tissues, where they differentiate into macrophages and dendritic cells. Acts as a negative regulator of angiogenesis, probably by promoting macrophage chemotaxis. Plays a key role in brain microglia by regulating inflammatory response in the central nervous system (CNS) and regulating synapse maturation. Required to restrain the microglial inflammatory response in the CNS and the resulting parenchymal damage in response to pathological stimuli. Involved in brain development by participating in synaptic pruning, a natural process during which brain microglia eliminates extra synapses during postnatal development. Synaptic pruning by microglia is required to promote the maturation of circuit connectivity during brain development. Acts as an important regulator of the gut microbiota by controlling immunity to intestinal bacteria and fungi. Expressed in lamina propria dendritic cells in the small intestine, which form transepithelial dendrites capable of taking up bacteria in order to provide defense against pathogenic bacteria. Required to initiate innate and adaptive immune responses against dissemination of commensal fungi (mycobiota) component of the gut: expressed in mononuclear phagocytes (MNPs) and acts by promoting induction of antifungal IgG antibodies response to confer protection against disseminated C.albicans or C.auris infection. Also acts as a receptor for C-C motif chemokine CCL26, inducing cell chemotaxis. (Microbial infection) Acts as a coreceptor with CD4 for HIV-1 virus envelope protein. In terms of biological role, (Microbial infection) Acts as a coreceptor with CD4 for HIV-1 virus envelope protein. May have more potent HIV-1 coreceptothr activity than isoform 1. Its function is as follows. (Microbial infection) Acts as a coreceptor with CD4 for HIV-1 virus envelope protein. May have more potent HIV-1 coreceptor activity than isoform 1. This Homo sapiens (Human) protein is CX3C chemokine receptor 1.